Here is a 758-residue protein sequence, read N- to C-terminus: 1-phosphatidylinositol 4,5-bisphosphate phosphodiesterase delta-4 (758 aa).

A PH domain is found at 16 to 124 (QLMQAGSPMR…WIQGLEKLIE (109 aa)). The substrate binding stretch occupies residues 26–53 (KVKSRSWKKQRYFKLQEDCMTIWYNSKK). EF-hand domains follow at residues 134–169 (LMDQ…MNVD), 170–205 (MSEH…LTQR), and 206–237 (DEVL…GQLE). Positions 147, 149, 151, 153, 158, 183, 185, 187, 189, and 194 each coordinate Ca(2+). Positions 213–243 (QDFSKDGKKLTLLEFVDFLQQGQLEEENTEE) match the GBA motif. Positions 290 to 435 (QDMMQPLCHY…LRGKILLKGK (146 aa)) constitute a PI-PLC X-box domain. Histidine 305 is a catalytic residue. Residues asparagine 306, glutamate 335, and aspartate 337 each coordinate Ca(2+). Histidine 350 is an active-site residue. Glutamate 384 serves as a coordination point for Ca(2+). Residues lysine 433 and lysine 435 each contribute to the substrate site. Acidic residues predominate over residues 446–468 (EQPDDSLGEVSDEEENIEVEEER). Positions 446–479 (EQPDDSLGEVSDEEENIEVEEERNEDKKRAKKSK) are disordered. The PI-PLC Y-box domain occupies 486–602 (LSDCVIYCKS…GYVLKPSFMR (117 aa)). Substrate contacts are provided by serine 515 and arginine 542. The region spanning 602-731 (RHVETTFNPD…SGYRHIHLLS (130 aa)) is the C2 domain. 6 residues coordinate Ca(2+): isoleucine 645, aspartate 647, asparagine 671, aspartate 700, tyrosine 701, and aspartate 702. A PDZ-binding motif is present at residues 726–729 (HIHL).

Requires Ca(2+) as cofactor.

It is found in the membrane. Its subcellular location is the nucleus. The protein resides in the cytoplasm. It localises to the endoplasmic reticulum. The enzyme catalyses a 1,2-diacyl-sn-glycero-3-phospho-(1D-myo-inositol-4,5-bisphosphate) + H2O = 1D-myo-inositol 1,4,5-trisphosphate + a 1,2-diacyl-sn-glycerol + H(+). The catalysed reaction is a 1,2-diacyl-sn-glycero-3-phospho-(1D-myo-inositol) + H2O = 1D-myo-inositol 1-phosphate + a 1,2-diacyl-sn-glycerol + H(+). Functionally, hydrolyzes the phosphatidylinositol 4,5-bisphosphate (PIP2) to generate 2 second messenger molecules diacylglycerol (DAG) and inositol 1,4,5-trisphosphate (IP3). DAG mediates the activation of protein kinase C (PKC), while IP3 releases Ca(2+) from intracellular stores. The sequence is that of 1-phosphatidylinositol 4,5-bisphosphate phosphodiesterase delta-4 (plcd4) from Xenopus laevis (African clawed frog).